Consider the following 97-residue polypeptide: MKTLAILVLCSLAAICLTSSASAGAQPAGDSPVQGGLFMEKDQASAVVRQTRAAKELTLAQTESLREVCETNMACDEMADAQGIVAAYQAFYGPIPF.

An N-terminal signal peptide occupies residues 1–18 (MKTLAILVLCSLAAICLT). Positions 19-52 (SSASAGAQPAGDSPVQGGLFMEKDQASAVVRQTR) are excised as a propeptide. Residues 53-93 (AAKELTLAQTESLREVCETNMACDEMADAQGIVAAYQAFYG) enclose the Gla domain. Positions 63, 67, 70, and 76 each coordinate Ca(2+). Glu-63, Glu-67, and Glu-70 each carry 4-carboxyglutamate. A disulfide bridge links Cys-69 with Cys-75. Residue Glu-77 is modified to 4-carboxyglutamate.

Belongs to the osteocalcin/matrix Gla protein family. Gamma-carboxyglutamate residues are formed by vitamin K dependent carboxylation by GGCX. These residues are essential for the binding of calcium. As to expression, in the branchial arches, BGP is found outside the chondrocyte-containing zone. It is found in some cells in the basal zone of the branchial filaments, near the branchial arches, and within the extracellular matrix in the medial zone. In the vertebra, BGP is found in the mineralized bone matrix.

It is found in the secreted. Its function is as follows. The carboxylated form is one of the main organic components of the bone matrix, which constitutes 1-2% of the total bone protein. The carboxylated form binds strongly to apatite and calcium. The chain is Osteocalcin (bglap) from Argyrosomus regius (Meagre).